Consider the following 73-residue polypeptide: Translation initiation factor IF-1 (73 aa).

Positions 1 to 73 (MAKKEDTIVL…TKARVVYRHR (73 aa)) constitute an S1-like domain.

It belongs to the IF-1 family. Component of the 30S ribosomal translation pre-initiation complex which assembles on the 30S ribosome in the order IF-2 and IF-3, IF-1 and N-formylmethionyl-tRNA(fMet); mRNA recruitment can occur at any time during PIC assembly.

The protein localises to the cytoplasm. Its function is as follows. One of the essential components for the initiation of protein synthesis. Stabilizes the binding of IF-2 and IF-3 on the 30S subunit to which N-formylmethionyl-tRNA(fMet) subsequently binds. Helps modulate mRNA selection, yielding the 30S pre-initiation complex (PIC). Upon addition of the 50S ribosomal subunit IF-1, IF-2 and IF-3 are released leaving the mature 70S translation initiation complex. The sequence is that of Translation initiation factor IF-1 from Chlamydia abortus (strain DSM 27085 / S26/3) (Chlamydophila abortus).